Here is a 427-residue protein sequence, read N- to C-terminus: Trigger factor (427 aa).

Residues 163–248 enclose the PPIase FKBP-type domain; that stretch reads GDTVVIDFVG…IHEVKAKEVP (86 aa).

It belongs to the FKBP-type PPIase family. Tig subfamily.

It is found in the cytoplasm. The catalysed reaction is [protein]-peptidylproline (omega=180) = [protein]-peptidylproline (omega=0). In terms of biological role, involved in protein export. Acts as a chaperone by maintaining the newly synthesized protein in an open conformation. Functions as a peptidyl-prolyl cis-trans isomerase. The protein is Trigger factor of Streptococcus pneumoniae (strain Hungary19A-6).